A 601-amino-acid chain; its full sequence is Alpha-terpineol synthase, chloroplastic (601 aa).

Residues 1–47 constitute a chloroplast transit peptide; it reads MSTISIHHVGILRNPLHSKSKRASINKPWSLSLPRSSSASRLVEPCR. Mn(2+) contacts are provided by D357 and D361. The DDXXD motif signature appears at 357 to 361; sequence DDVYD. Homodimerization stretches follow at residues 363-369 and 435-471; these read YGTLDEL and EAEW…ELSL. Mn(2+) contacts are provided by D499 and E507.

The protein belongs to the terpene synthase family. As to quaternary structure, homodimer. Mn(2+) serves as cofactor. The cofactor is Mg(2+).

Its subcellular location is the plastid. The protein resides in the chloroplast. It carries out the reaction (2E)-geranyl diphosphate + H2O = (S)-alpha-terpineol + diphosphate. The catalysed reaction is (2E)-geranyl diphosphate + H2O = (R)-alpha-terpineol + diphosphate. Its pathway is secondary metabolite biosynthesis; terpenoid biosynthesis. Functionally, involved in the biosynthesis of phenolic monoterpenes natural products. Monoterpene synthase which catalyzes the conversion of geranyl diphosphate (GPP) to alpha-terpineol (isomer is not determined). The protein is Alpha-terpineol synthase, chloroplastic of Thymus caespititius (Cretan thyme).